A 419-amino-acid polypeptide reads, in one-letter code: Esterase FrsA (419 aa).

The protein belongs to the FrsA family.

It carries out the reaction a carboxylic ester + H2O = an alcohol + a carboxylate + H(+). Catalyzes the hydrolysis of esters. This chain is Esterase FrsA, found in Photobacterium profundum (strain SS9).